A 448-amino-acid polypeptide reads, in one-letter code: TRAF family member-associated NF-kappa-B activator (448 aa).

Positions 35-65 (MDKNIGEQLNRAYEAFRQACMDRDSAVRELQ) are necessary for interaction with ZC3H12A. Residues 60-98 (AVRELQQKQTENYEQRIREQQEQLSFQQNLIDRLKSQLL) adopt a coiled-coil conformation. The segment at 105-224 (DNSYGYVPLL…QCTDKTEKQE (120 aa)) is necessary for interaction with TRAF6. The interaction with TBK1 and IKBKE stretch occupies residues 166–205 (HERDNIEKTFWDLKEEFHRICLLAKAQKDHLSKLNIPDIA). Residues 205–224 (ATDTQCSVPIQCTDKTEKQE) are TRAF family member interaction. The residue at position 211 (S211) is a Phosphoserine. The residue at position 246 (T246) is a Phosphothreonine. Residues S258, S261, S377, and S380 each carry the phosphoserine modification. Residues 416–443 (PLVCEFCQELFPPSITSRGDFLRHLNTH) form a UBZ1-type zinc finger. The Zn(2+) site is built by C419, C422, H439, and H443.

In terms of assembly, homodimer. Found in a deubiquitination complex with TANK, USP10 and ZC3H12A; this complex inhibits genotoxic stress- or interleukin-1-beta-mediated NF-kappaB activation by promoting IKBKG or TRAF6 deubiquitination. Interacts with IKBKG; this interaction increases in response to DNA damage. Interacts with TRAF6; this interaction increases in response to DNA damage and recruits USP10 to the ubiquitinated TRAF6. Interacts with USP10; this interaction increases in response to DNA damage. Interacts with TBK1 and IKBKE. Also interacts with TRAF1, TRAF2, and TRAF3 by binding to their TRAF-C domains; the interaction with TRAF2 is disrupted by the phosphorylation of TANK by IKBKE. Interacts more strongly with TRAF1 and TRAF2 than TRAF3. Part of a ternary complex consisting of TANK, IKBKB and IKBKG. Interacts with IKBKG; the interaction is enhanced by IKBKE and TBK1. As to expression, heart, brain, spleen, lung, liver, skeletal muscle, kidney and testis.

Its subcellular location is the cytoplasm. In terms of biological role, adapter protein involved in I-kappa-B-kinase (IKK) regulation which constitutively binds TBK1 and IKBKE playing a role in antiviral innate immunity. Acts as a regulator of TRAF function by maintaining them in a latent state. Blocks TRAF2 binding to LMP1 and inhibits LMP1-mediated NF-kappa-B activation. Negatively regulates NF-kappaB signaling and cell survival upon DNA damage. Plays a role as an adapter to assemble ZC3H12A, USP10 in a deubiquitination complex which plays a negative feedback response to attenuate NF-kappaB activation through the deubiquitination of IKBKG or TRAF6 in response to interleukin-1-beta (IL1B) stimulation or upon DNA damage. Promotes UBP10-induced deubiquitination of TRAF6 in response to DNA damage. May control negatively TRAF2-mediated NF-kappa-B activation signaled by CD40, TNFR1 and TNFR2. Essential for the efficient induction of IRF-dependent transcription following infection with Sendai virus. The polypeptide is TRAF family member-associated NF-kappa-B activator (Tank) (Mus musculus (Mouse)).